A 356-amino-acid chain; its full sequence is Cyclin-D2-2 (356 aa).

A compositionally biased stretch (polar residues) spans 325 to 343; it reads LGSSQSNSNNKDYNSQDSA. Residues 325-356 form a disordered region; sequence LGSSQSNSNNKDYNSQDSAPASKRRRLNTTPI. The segment covering 346 to 356 has biased composition (basic residues); the sequence is SKRRRLNTTPI.

Belongs to the cyclin family. Cyclin D subfamily.

The sequence is that of Cyclin-D2-2 (CYCD2-2) from Oryza sativa subsp. japonica (Rice).